Reading from the N-terminus, the 646-residue chain is Type III restriction-modification enzyme EcoPI Mod subunit (646 aa).

Residues aspartate 123 to tyrosine 126 are binding of S-adenosyl methionine.

Belongs to the N(4)/N(6)-methyltransferase family. As to quaternary structure, homodimer. A heterotetramer with stoichiometry Res(2)Mod(2).

It carries out the reaction a 2'-deoxyadenosine in DNA + S-adenosyl-L-methionine = an N(6)-methyl-2'-deoxyadenosine in DNA + S-adenosyl-L-homocysteine + H(+). Functionally, a beta subtype methylase that binds the system-specific DNA recognition site 5'-AGACC-3' and methylates A-3 (of only 1 strand as the other does not have an A residue). DNA restriction requires both the Res and Mod subunits. This chain is Type III restriction-modification enzyme EcoPI Mod subunit, found in Enterobacteriaceae (Bacteriophage P1).